We begin with the raw amino-acid sequence, 317 residues long: ADP-L-glycero-D-manno-heptose-6-epimerase (317 aa).

NADP(+)-binding positions include 10–11, 31–32, K38, K53, 75–79, and N92; these read FI, DD, and QGACS. The active-site Proton acceptor is Y139. K143 lines the NADP(+) pocket. N166 serves as a coordination point for substrate. The NADP(+) site is built by V167 and K175. K175 acts as the Proton acceptor in catalysis. Substrate-binding positions include G177, H184, 198 to 201, R211, and Y275; that span reads FQGH.

The protein belongs to the NAD(P)-dependent epimerase/dehydratase family. HldD subfamily. Homopentamer. The cofactor is NADP(+).

The enzyme catalyses ADP-D-glycero-beta-D-manno-heptose = ADP-L-glycero-beta-D-manno-heptose. The protein operates within nucleotide-sugar biosynthesis; ADP-L-glycero-beta-D-manno-heptose biosynthesis; ADP-L-glycero-beta-D-manno-heptose from D-glycero-beta-D-manno-heptose 7-phosphate: step 4/4. In terms of biological role, catalyzes the interconversion between ADP-D-glycero-beta-D-manno-heptose and ADP-L-glycero-beta-D-manno-heptose via an epimerization at carbon 6 of the heptose. This chain is ADP-L-glycero-D-manno-heptose-6-epimerase, found in Shewanella loihica (strain ATCC BAA-1088 / PV-4).